The primary structure comprises 548 residues: Chaperonin GroEL (548 aa).

ATP is bound by residues 29-32 (TLGP), K50, 86-90 (DGTTT), G414, 478-480 (NAA), and D494.

This sequence belongs to the chaperonin (HSP60) family. As to quaternary structure, forms a cylinder of 14 subunits composed of two heptameric rings stacked back-to-back. Interacts with the co-chaperonin GroES.

The protein resides in the cytoplasm. It carries out the reaction ATP + H2O + a folded polypeptide = ADP + phosphate + an unfolded polypeptide.. In terms of biological role, together with its co-chaperonin GroES, plays an essential role in assisting protein folding. The GroEL-GroES system forms a nano-cage that allows encapsulation of the non-native substrate proteins and provides a physical environment optimized to promote and accelerate protein folding. The chain is Chaperonin GroEL from Psychrobacter sp. (strain PRwf-1).